The sequence spans 249 residues: 4-hydroxy-tetrahydrodipicolinate reductase (249 aa).

NAD(+) is bound by residues 77–79 (ATT) and 101–104 (SYNT). Histidine 133 serves as the catalytic Proton donor/acceptor. Residue histidine 134 coordinates (S)-2,3,4,5-tetrahydrodipicolinate. The active-site Proton donor is the lysine 137. 143-144 (GT) contributes to the (S)-2,3,4,5-tetrahydrodipicolinate binding site.

It belongs to the DapB family.

The protein resides in the cytoplasm. It carries out the reaction (S)-2,3,4,5-tetrahydrodipicolinate + NAD(+) + H2O = (2S,4S)-4-hydroxy-2,3,4,5-tetrahydrodipicolinate + NADH + H(+). The enzyme catalyses (S)-2,3,4,5-tetrahydrodipicolinate + NADP(+) + H2O = (2S,4S)-4-hydroxy-2,3,4,5-tetrahydrodipicolinate + NADPH + H(+). It functions in the pathway amino-acid biosynthesis; L-lysine biosynthesis via DAP pathway; (S)-tetrahydrodipicolinate from L-aspartate: step 4/4. Its function is as follows. Catalyzes the conversion of 4-hydroxy-tetrahydrodipicolinate (HTPA) to tetrahydrodipicolinate. This Exiguobacterium sp. (strain ATCC BAA-1283 / AT1b) protein is 4-hydroxy-tetrahydrodipicolinate reductase.